The sequence spans 215 residues: Probable phosphoglycerate mutase GpmB (215 aa).

Substrate is bound by residues 8 to 15 (RHGETQWN), 21 to 22 (QG), arginine 58, lysine 60, 82 to 85 (ELDM), 104 to 105 (RR), and 151 to 152 (GI). Histidine 9 (tele-phosphohistidine intermediate) is an active-site residue. Glutamate 82 acts as the Proton donor/acceptor in catalysis.

Belongs to the phosphoglycerate mutase family. GpmB subfamily.

The catalysed reaction is (2R)-2-phosphoglycerate = (2R)-3-phosphoglycerate. The protein operates within carbohydrate degradation; glycolysis; pyruvate from D-glyceraldehyde 3-phosphate: step 3/5. In Salmonella arizonae (strain ATCC BAA-731 / CDC346-86 / RSK2980), this protein is Probable phosphoglycerate mutase GpmB.